A 308-amino-acid polypeptide reads, in one-letter code: Bifunctional protein FolD (308 aa).

170–172 (GKG) serves as a coordination point for NADP(+).

It belongs to the tetrahydrofolate dehydrogenase/cyclohydrolase family. Homodimer.

The catalysed reaction is (6R)-5,10-methylene-5,6,7,8-tetrahydrofolate + NADP(+) = (6R)-5,10-methenyltetrahydrofolate + NADPH. The enzyme catalyses (6R)-5,10-methenyltetrahydrofolate + H2O = (6R)-10-formyltetrahydrofolate + H(+). It participates in one-carbon metabolism; tetrahydrofolate interconversion. Catalyzes the oxidation of 5,10-methylenetetrahydrofolate to 5,10-methenyltetrahydrofolate and then the hydrolysis of 5,10-methenyltetrahydrofolate to 10-formyltetrahydrofolate. This is Bifunctional protein FolD from Pyrobaculum calidifontis (strain DSM 21063 / JCM 11548 / VA1).